A 201-amino-acid polypeptide reads, in one-letter code: IMP cyclohydrolase (201 aa).

Belongs to the archaeal IMP cyclohydrolase family.

The catalysed reaction is IMP + H2O = 5-formamido-1-(5-phospho-D-ribosyl)imidazole-4-carboxamide. It participates in purine metabolism; IMP biosynthesis via de novo pathway; IMP from 5-formamido-1-(5-phospho-D-ribosyl)imidazole-4-carboxamide: step 1/1. Functionally, catalyzes the cyclization of 5-formylamidoimidazole-4-carboxamide ribonucleotide to IMP. In Methanococcus maripaludis (strain DSM 14266 / JCM 13030 / NBRC 101832 / S2 / LL), this protein is IMP cyclohydrolase.